The sequence spans 96 residues: Small ribosomal subunit protein bS18 (96 aa).

The segment at 1 to 20 is disordered; the sequence is MSHGGKRRSGDGGSEGSSYS.

This sequence belongs to the bacterial ribosomal protein bS18 family. As to quaternary structure, part of the 30S ribosomal subunit. Forms a tight heterodimer with protein bS6.

In terms of biological role, binds as a heterodimer with protein bS6 to the central domain of the 16S rRNA, where it helps stabilize the platform of the 30S subunit. The protein is Small ribosomal subunit protein bS18 of Anaplasma phagocytophilum (strain HZ).